The following is a 573-amino-acid chain: PCNA-interacting partner (573 aa).

The interval 463 to 511 (VSEGAQPSVGKARLETSSENVHVDRSKDDKGPRKSTKRKLAKSKQPGVR) is disordered. The segment covering 474–494 (ARLETSSENVHVDRSKDDKGP) has biased composition (basic and acidic residues). The span at 495–504 (RKSTKRKLAK) shows a compositional bias: basic residues.

This sequence belongs to the PARI family. As to quaternary structure, interacts with RAD51 and PCNA. Interacts with PARP1. Interacts with TASOR. Present in testis (at protein level). Expressed in testis, gastrointestinal tract (jejunum, ileum, and colon) and immune system (thymus and spleen). Weakly expressed in lung, kidney, pituitary gland and muscle.

Its subcellular location is the cytoplasm. The protein localises to the nucleus. Its function is as follows. Required to suppress inappropriate homologous recombination, thereby playing a central role DNA repair and in the maintenance of genomic stability. Antagonizes homologous recombination by interfering with the formation of the RAD51-DNA homologous recombination structure. Positively regulate the poly(ADP-ribosyl)ation activity of PARP1; however such function may be indirect. Binds single-strand DNA and poly(A) homopolymers. This is PCNA-interacting partner (Parpbp) from Rattus norvegicus (Rat).